A 133-amino-acid polypeptide reads, in one-letter code: Large-conductance mechanosensitive channel (133 aa).

2 consecutive transmembrane segments (helical) span residues 10–30 (FAVK…AAFG) and 76–96 (GIFV…FLVV).

Belongs to the MscL family. In terms of assembly, homopentamer.

It localises to the cell inner membrane. In terms of biological role, channel that opens in response to stretch forces in the membrane lipid bilayer. May participate in the regulation of osmotic pressure changes within the cell. In Chlorobium phaeobacteroides (strain BS1), this protein is Large-conductance mechanosensitive channel.